Here is a 1226-residue protein sequence, read N- to C-terminus: Methionine synthase (1226 aa).

Residues 6 to 326 form the Hcy-binding domain; sequence RAQIEAQLKQ…EHIRHMAMAV (321 aa). Positions 248, 311, and 312 each coordinate Zn(2+). The Pterin-binding domain maps to 357–618; it reads FVNVGERTNV…VPEKLREAVE (262 aa). One can recognise a B12-binding N-terminal domain in the interval 651-745; it reads SALEWRTWSV…FINASKQAGS (95 aa). Methylcob(III)alamin is bound by residues E695, 757–761, H760, S805, T809, and A861; that span reads GDVHD. Residues 747 to 882 enclose the B12-binding domain; the sequence is NGKILLATVK…SDELRPAFVE (136 aa). The 329-residue stretch at 898 to 1226 folds into the AdoMet activation domain; it reads KKPRTKPVTL…EKWLGPNING (329 aa). S-adenosyl-L-methionine-binding positions include D948, R1136, and 1191 to 1192; that span reads YF.

This sequence belongs to the vitamin-B12 dependent methionine synthase family. The cofactor is methylcob(III)alamin. It depends on Zn(2+) as a cofactor.

It carries out the reaction (6S)-5-methyl-5,6,7,8-tetrahydrofolate + L-homocysteine = (6S)-5,6,7,8-tetrahydrofolate + L-methionine. Its pathway is amino-acid biosynthesis; L-methionine biosynthesis via de novo pathway; L-methionine from L-homocysteine (MetH route): step 1/1. Functionally, catalyzes the transfer of a methyl group from methyl-cobalamin to homocysteine, yielding enzyme-bound cob(I)alamin and methionine. Subsequently, remethylates the cofactor using methyltetrahydrofolate. This chain is Methionine synthase (metH), found in Vibrio vulnificus (strain CMCP6).